Here is a 301-residue protein sequence, read N- to C-terminus: uncharacterized protein (301 aa).

This is an uncharacterized protein from Methanocaldococcus jannaschii (strain ATCC 43067 / DSM 2661 / JAL-1 / JCM 10045 / NBRC 100440) (Methanococcus jannaschii).